The primary structure comprises 86 residues: OMEGA-stichotoxin-Shd4a (86 aa).

Residues Met1–Ala23 form the signal peptide. The propeptide occupies Arg24–Asn36. Residues Glu40 to Asp82 enclose the EGF-like domain. Disulfide bonds link Cys44–Cys59, Cys53–Cys70, and Cys72–Cys81.

It belongs to the EGF domain peptide family.

The protein resides in the secreted. The protein localises to the nematocyst. Has both toxic and EGF activity. Its EGF activity consists of rounding cells (morphological change) and inducing tyrosine phosphorylation of the EGFR in A431 cells, but with a lower potency that human EGF. The protein is OMEGA-stichotoxin-Shd4a of Stichodactyla haddoni (Saddle carpet anemone).